A 217-amino-acid polypeptide reads, in one-letter code: Octanoyltransferase (217 aa).

One can recognise a BPL/LPL catalytic domain in the interval 32–207; that stretch reads NDSPDELWIV…TLSQLLGYQH (176 aa). Substrate contacts are provided by residues 71 to 78, 138 to 140, and 151 to 153; these read RGGQVTYH, SLG, and GLA. C169 serves as the catalytic Acyl-thioester intermediate.

The protein belongs to the LipB family.

The protein localises to the cytoplasm. It carries out the reaction octanoyl-[ACP] + L-lysyl-[protein] = N(6)-octanoyl-L-lysyl-[protein] + holo-[ACP] + H(+). It participates in protein modification; protein lipoylation via endogenous pathway; protein N(6)-(lipoyl)lysine from octanoyl-[acyl-carrier-protein]: step 1/2. Its function is as follows. Catalyzes the transfer of endogenously produced octanoic acid from octanoyl-acyl-carrier-protein onto the lipoyl domains of lipoate-dependent enzymes. Lipoyl-ACP can also act as a substrate although octanoyl-ACP is likely to be the physiological substrate. The sequence is that of Octanoyltransferase from Shewanella oneidensis (strain ATCC 700550 / JCM 31522 / CIP 106686 / LMG 19005 / NCIMB 14063 / MR-1).